Consider the following 896-residue polypeptide: DNA mismatch repair protein MutS (896 aa).

An ATP-binding site is contributed by 599–606 (GPNMAGKS).

This sequence belongs to the DNA mismatch repair MutS family.

Functionally, this protein is involved in the repair of mismatches in DNA. It is possible that it carries out the mismatch recognition step. This protein has a weak ATPase activity. In Geobacillus kaustophilus (strain HTA426), this protein is DNA mismatch repair protein MutS.